The chain runs to 447 residues: MERKGIFIKVFSYTIIVLLLLVGVTATLFAQQFVSYFRAMEAQQTVKSYQPLVELIQNSDRLDMQEVAGLFHYNNQSFEFYIEDKEGSVLYATPNADTSNSVRPDFLYVVHRDDNISIVAQSKAGVGLLYQGLTIRGIVMIAIMVVFSLLCAYIFARQMTTPIKALADSANKMANLKEVPPPLERKDELGALAHDMHSMYIRLKETIARLEDEIAREHELEETQRYFFAAASHELKTPIAAVSVLLEGMLENIGDYKDHSKYLRECIKMMDRQGKTISEILELVSLNDGRIVPIAEPLDIGRTVAELLPDFQTLAEANNQRFVTDIPAGQIVLSDPKLIQKALSNVILNAVQNTPQGGEVRIWSEPGAEKYRLSVLNMGVHIDDTALSKLFIPFYRIDQARSRKSGRSGLGLAIVQKTLDAMSLQYALENTSDGVLFWLDLPPTSTL.

The next 2 membrane-spanning stretches (helical) occupy residues 10–30 (VFSY…TLFA) and 137–155 (GIVM…AYIF). Positions 157–208 (RQMTTPIKALADSANKMANLKEVPPPLERKDELGALAHDMHSMYIRLKETIA) constitute an HAMP domain. The 216-residue stretch at 230 to 445 (AASHELKTPI…LFWLDLPPTS (216 aa)) folds into the Histidine kinase domain. A Phosphohistidine; by autocatalysis modification is found at H233.

It is found in the cell membrane. It carries out the reaction ATP + protein L-histidine = ADP + protein N-phospho-L-histidine.. Its function is as follows. Member of the two-component regulatory system VanSB/VanRB. Activates the transcription of vanSB, vanYB and vanW in response to vancomycin which results in vancomycin resistance. VanSB may activate VanRB by phosphorylation. May also act as a phospho-VanRB phosphatase. This Enterococcus faecalis (strain ATCC 700802 / V583) protein is Sensor protein VanSB (vanSB).